The chain runs to 84 residues: ATP synthase subunit c (84 aa).

The next 2 membrane-spanning stretches (helical) occupy residues 9–29 (IFGS…GFSL) and 54–74 (IVAG…LLFI).

It belongs to the ATPase C chain family. As to quaternary structure, F-type ATPases have 2 components, F(1) - the catalytic core - and F(0) - the membrane proton channel. F(1) has five subunits: alpha(3), beta(3), gamma(1), delta(1), epsilon(1). F(0) has three main subunits: a(1), b(2) and c(10-14). The alpha and beta chains form an alternating ring which encloses part of the gamma chain. F(1) is attached to F(0) by a central stalk formed by the gamma and epsilon chains, while a peripheral stalk is formed by the delta and b chains.

The protein localises to the cell inner membrane. Its function is as follows. F(1)F(0) ATP synthase produces ATP from ADP in the presence of a proton or sodium gradient. F-type ATPases consist of two structural domains, F(1) containing the extramembraneous catalytic core and F(0) containing the membrane proton channel, linked together by a central stalk and a peripheral stalk. During catalysis, ATP synthesis in the catalytic domain of F(1) is coupled via a rotary mechanism of the central stalk subunits to proton translocation. Functionally, key component of the F(0) channel; it plays a direct role in translocation across the membrane. A homomeric c-ring of between 10-14 subunits forms the central stalk rotor element with the F(1) delta and epsilon subunits. This is ATP synthase subunit c from Histophilus somni (strain 129Pt) (Haemophilus somnus).